Reading from the N-terminus, the 428-residue chain is L-gulono-1,4-lactone dehydrogenase (428 aa).

Residues 12 to 179 (QVCAPSAIVR…SQVTLQTVPL (168 aa)) form the FAD-binding PCMH-type domain.

This sequence belongs to the oxygen-dependent FAD-linked oxidoreductase family. The cofactor is a divalent metal cation.

It carries out the reaction L-gulono-1,4-lactone + 2 Fe(III)-[cytochrome c] = L-ascorbate + 2 Fe(II)-[cytochrome c] + 3 H(+). It participates in cofactor biosynthesis; L-ascorbate biosynthesis. Its function is as follows. Oxidizes L-gulono-1,4-lactone to L-xylo-hexulonolactone which spontaneously isomerizes to L-ascorbate. The protein is L-gulono-1,4-lactone dehydrogenase of Mycobacterium tuberculosis (strain CDC 1551 / Oshkosh).